The primary structure comprises 387 residues: MEELLMNRFVEIFGEKGTACYFAPGRINLIGEHTDYNGGHVFPAAITLGTFGVARKRDDQKIRMFSDNFKEVGLIEFSLEDLTYSDSDDWANYPKGVLNYLIESGHNIDSGLDVLFYGTIPNGAGLSSSASIELLMGTICNDLYALHCPMLELVQIGKKVENEFIGVNSGIMDQFAVGMGEKDQAILLDTNNMHYEMVPAKLGEYTIVIMNTNKRRELADSKYNERRAECEEAVRLLQKELSIEFLGELDSETFEQYQALIGDPALIKRARHAVTENERTLLAKQALTEGDLEEFGLLLNASHRSLKEDYEVTGIELDTLVACAQEQPGVLGARMTGAGFGGCSIALVPKQNIDAFIEAVGQSYQDKIGYAADFYPASIDDGARKLF.

32-35 (EHTD) serves as a coordination point for substrate. Residues S66 and 123–129 (GAGLSSS) contribute to the ATP site. Positions 129 and 161 each coordinate Mg(2+). D173 serves as the catalytic Proton acceptor. Y223 contributes to the substrate binding site.

It belongs to the GHMP kinase family. GalK subfamily.

The protein localises to the cytoplasm. It carries out the reaction alpha-D-galactose + ATP = alpha-D-galactose 1-phosphate + ADP + H(+). The protein operates within carbohydrate metabolism; galactose metabolism. In terms of biological role, catalyzes the transfer of the gamma-phosphate of ATP to D-galactose to form alpha-D-galactose-1-phosphate (Gal-1-P). The protein is Galactokinase of Enterococcus faecalis (strain ATCC 700802 / V583).